Consider the following 404-residue polypeptide: S-adenosylmethionine synthase (404 aa).

H18 serves as a coordination point for ATP. D20 is a binding site for Mg(2+). Residue E46 coordinates K(+). L-methionine is bound by residues E59 and Q102. The flexible loop stretch occupies residues 102-112 (QSPEIAQGVDH). ATP-binding positions include 178-180 (DGK), 249-250 (KF), D258, 264-265 (RK), A281, and K285. D258 contacts L-methionine. K289 serves as a coordination point for L-methionine.

This sequence belongs to the AdoMet synthase family. In terms of assembly, homotetramer; dimer of dimers. Requires Mg(2+) as cofactor. The cofactor is K(+).

It is found in the cytoplasm. It carries out the reaction L-methionine + ATP + H2O = S-adenosyl-L-methionine + phosphate + diphosphate. It functions in the pathway amino-acid biosynthesis; S-adenosyl-L-methionine biosynthesis; S-adenosyl-L-methionine from L-methionine: step 1/1. Its function is as follows. Catalyzes the formation of S-adenosylmethionine (AdoMet) from methionine and ATP. The overall synthetic reaction is composed of two sequential steps, AdoMet formation and the subsequent tripolyphosphate hydrolysis which occurs prior to release of AdoMet from the enzyme. This chain is S-adenosylmethionine synthase, found in Rhodococcus jostii (strain RHA1).